Consider the following 636-residue polypeptide: Threonine--tRNA ligase (636 aa).

The region spanning 1 to 63 (MNEINVTLPD…ADGARVEIIT (63 aa)) is the TGS domain. The interval 243–534 (DHRKLGRELD…LIEHFAGNFP (292 aa)) is catalytic. The Zn(2+) site is built by Cys335, His386, and His511.

It belongs to the class-II aminoacyl-tRNA synthetase family. Homodimer. It depends on Zn(2+) as a cofactor.

Its subcellular location is the cytoplasm. It catalyses the reaction tRNA(Thr) + L-threonine + ATP = L-threonyl-tRNA(Thr) + AMP + diphosphate + H(+). In terms of biological role, catalyzes the attachment of threonine to tRNA(Thr) in a two-step reaction: L-threonine is first activated by ATP to form Thr-AMP and then transferred to the acceptor end of tRNA(Thr). Also edits incorrectly charged L-seryl-tRNA(Thr). The chain is Threonine--tRNA ligase from Citrifermentans bemidjiense (strain ATCC BAA-1014 / DSM 16622 / JCM 12645 / Bem) (Geobacter bemidjiensis).